Consider the following 373-residue polypeptide: MSEKKINLLDLDRKAMRALFADLGEKPFRADQLMKWIYHFGVSDFEEMTNINKVLRQKLAARCEIVAPEISSYQKSTDGTIKFAIHVGEGQEVETVYIPEDDRATLCVSSQVGCALECTFCSTAQQGFNRNLTVSEIVGQIWRVSHFLGFAKDTGERPITNVVMMGMGEPLLNLANVIPAMDIMLDDFGFSLSKRRVTLSTSGVVPALDKLGDALDVALAVSIHAPNDELRDILVPVNKKYPLQEFLAGIRRYIAKSNANRGRVTVEYVMLDHINDSTEQAHELAQLMKDTPCKVNLIPFNPYPGSPYGRSSNSRIDRFSKVLMEYGLTVIVRKTRGDDIDAACGQLAGDIRDRTKRLAKKRMQENQISVTMN.

Glutamate 94 serves as the catalytic Proton acceptor. Residues 100 to 339 (EDDRATLCVS…VIVRKTRGDD (240 aa)) enclose the Radical SAM core domain. Cysteine 107 and cysteine 344 form a disulfide bridge. [4Fe-4S] cluster-binding residues include cysteine 114, cysteine 118, and cysteine 121. S-adenosyl-L-methionine contacts are provided by residues 168-169 (GE), serine 200, 222-224 (SIH), and asparagine 301. Cysteine 344 acts as the S-methylcysteine intermediate in catalysis.

The protein belongs to the radical SAM superfamily. RlmN family. [4Fe-4S] cluster serves as cofactor.

It is found in the cytoplasm. The enzyme catalyses adenosine(2503) in 23S rRNA + 2 reduced [2Fe-2S]-[ferredoxin] + 2 S-adenosyl-L-methionine = 2-methyladenosine(2503) in 23S rRNA + 5'-deoxyadenosine + L-methionine + 2 oxidized [2Fe-2S]-[ferredoxin] + S-adenosyl-L-homocysteine. It catalyses the reaction adenosine(37) in tRNA + 2 reduced [2Fe-2S]-[ferredoxin] + 2 S-adenosyl-L-methionine = 2-methyladenosine(37) in tRNA + 5'-deoxyadenosine + L-methionine + 2 oxidized [2Fe-2S]-[ferredoxin] + S-adenosyl-L-homocysteine. In terms of biological role, specifically methylates position 2 of adenine 2503 in 23S rRNA and position 2 of adenine 37 in tRNAs. m2A2503 modification seems to play a crucial role in the proofreading step occurring at the peptidyl transferase center and thus would serve to optimize ribosomal fidelity. This chain is Dual-specificity RNA methyltransferase RlmN, found in Shewanella sp. (strain MR-7).